The following is a 347-amino-acid chain: tRNA N6-adenosine threonylcarbamoyltransferase (347 aa).

Residues His-109 and His-113 each contribute to the Fe cation site. Residues Thr-136–Gly-140, Asp-169, Gly-182, Asp-186, and Asn-284 contribute to the substrate site. Fe cation is bound at residue Asp-312.

It belongs to the KAE1 / TsaD family. Requires Fe(2+) as cofactor.

It localises to the cytoplasm. The catalysed reaction is L-threonylcarbamoyladenylate + adenosine(37) in tRNA = N(6)-L-threonylcarbamoyladenosine(37) in tRNA + AMP + H(+). Its function is as follows. Required for the formation of a threonylcarbamoyl group on adenosine at position 37 (t(6)A37) in tRNAs that read codons beginning with adenine. Is involved in the transfer of the threonylcarbamoyl moiety of threonylcarbamoyl-AMP (TC-AMP) to the N6 group of A37, together with TsaE and TsaB. TsaD likely plays a direct catalytic role in this reaction. In Chlorobium phaeobacteroides (strain BS1), this protein is tRNA N6-adenosine threonylcarbamoyltransferase.